The primary structure comprises 89 residues: Omega-theraphotoxin-Ba1c (89 aa).

An N-terminal signal peptide occupies residues 1 to 23 (MRSLTLAAVLACSLLLVFHTSAA). Positions 24 to 50 (EEHEAQEGYLMNPGDTDTALATVDDER) are excised as a propeptide. 3 cysteine pairs are disulfide-bonded: Cys54–Cys75, Cys58–Cys81, and Cys67–Cys86.

It belongs to the neurotoxin 12 (Hwtx-2) family. 06 (TXP1) subfamily. Expressed by the venom gland.

Its subcellular location is the secreted. Its function is as follows. Inhibits voltage-gated calcium channels (Cav) in rat cerebellar granule cells. Has insecticidal activity. The chain is Omega-theraphotoxin-Ba1c from Brachypelma albiceps (Mexican golden redrump tarantula).